The following is a 250-amino-acid chain: MQISSRSGFGYFSYGIRLALTPGIRRFVVLPLLANIILVGGAMYYLFSHLDTWISEWIGQLPSFLSWLSYVLWPLLALTILATFSYFFSTLANFIASPFNGLLAEKVEQHLSGERIGEEGVWALVKDVPRILSREWRKLLYVLPKALGLFLLLLIPALGQTLGPIAWFLFTAWMLAIQYCDYPFDNHKISFHDMRNTLKQNQSKAYGFGMLVAFFTSIPIVNLFIVPVAVCGATAMWVMEFKTQHSPLRQ.

The next 4 helical transmembrane spans lie at 27–47, 64–84, 150–170, and 210–230; these read FVVLPLLANIILVGGAMYYLF, FLSWLSYVLWPLLALTILATF, FLLLLIPALGQTLGPIAWFLF, and MLVAFFTSIPIVNLFIVPVAV.

This sequence belongs to the CysZ family.

The protein resides in the cell inner membrane. High affinity, high specificity proton-dependent sulfate transporter, which mediates sulfate uptake. Provides the sulfur source for the cysteine synthesis pathway. This Vibrio cholerae serotype O1 (strain ATCC 39541 / Classical Ogawa 395 / O395) protein is Sulfate transporter CysZ.